Here is an 877-residue protein sequence, read N- to C-terminus: MTTVTPMMAQYLEIKEAYADALLFYRMGDFYEMFFDDAVAAAEALDIALTKRGKHEGEDIPMCGVPVHAAEGYLLTLIRKGFRVAVCEQMESPAEAKKRGSKSVVRRDVVRLVTPGTLTEDALLEARRHNFLVAYAEVRSGAALAWADISTGDFHVMPVTRPRLSPELARLAPSELLVVDEPVFQQLRPLADDHRIPLTPLGKASFDSMAAEKRLCELYKVGSLEGFGTFARAELSAMGALIDYLDITQKGKLPLLQPPVQEAEDRVMQIDAATRRNLELTRSLSGERGGSLLSVIDRTVTPGGARLLEQRLGSPSRNLDVIHARLSALDFCIDHSTLAADLRAALRKTPDLDRALSRLALDRGGPRDLAAIRNGLGQAEAIAALCDGLELPGLIAGACADLNGFDELLGLLDTALVAEPPLLARDGGFIAPGYDSDLDEARELRDKGRGVIAGMQQKYAEHTGIASLKIKHNNVLGYFIETTATHAAKMLNPPLSETYIHRQTTANQVRFTTVELSELETRILNAGNHALEIEKRLYSSLSGAVLEQAARLNIAARGLAELDLATALADLARAENWCRPSVDPSRAFAIEGGRHPVVEHALRRQGGDPFVANDCDLSADKGAAIRLLTGPNMAGKSTYLRQNALITLLAQIGSYVPADSAHIGVVSQLFSRVGASDDLARGRSTFMVEMVETAAILNQADDHALVILDEIGRGTATYDGLSIAWATLEHLHATNRCRALFATHYHELTALAATLDGVENLTVAVKEWEGEVIFLHEVRKGAADRSYGVQVAQLAGLPPSVVARARVVLDQLEKSEREGGKQKALIDDLPLFSAAPPLPPPAPKTSPADAMLKEIHPDELTPRQALEMLYKLKEAAR.

An ATP-binding site is contributed by 630–637 (GPNMAGKS).

This sequence belongs to the DNA mismatch repair MutS family.

This protein is involved in the repair of mismatches in DNA. It is possible that it carries out the mismatch recognition step. This protein has a weak ATPase activity. The protein is DNA mismatch repair protein MutS of Ruegeria pomeroyi (strain ATCC 700808 / DSM 15171 / DSS-3) (Silicibacter pomeroyi).